A 653-amino-acid polypeptide reads, in one-letter code: Modification methylase StsI (653 aa).

The protein belongs to the N(4)/N(6)-methyltransferase family. Monomer.

The enzyme catalyses a 2'-deoxyadenosine in DNA + S-adenosyl-L-methionine = an N(6)-methyl-2'-deoxyadenosine in DNA + S-adenosyl-L-homocysteine + H(+). Functionally, an alpha subtype methylase that recognizes the double-stranded sequence 5'-GGATG-3' in one strand and 3'-CATCC-5' in the other, methylates A of both strands, and protects the DNA from cleavage by the StsI endonuclease. The 2 domains of the protein participate in modification of the two strands. The chain is Modification methylase StsI (stsIM) from Streptococcus sanguinis.